The chain runs to 313 residues: Porphobilinogen deaminase (313 aa).

Cysteine 241 carries the S-(dipyrrolylmethanemethyl)cysteine modification.

Belongs to the HMBS family. Monomer. Dipyrromethane serves as cofactor.

It catalyses the reaction 4 porphobilinogen + H2O = hydroxymethylbilane + 4 NH4(+). It participates in porphyrin-containing compound metabolism; protoporphyrin-IX biosynthesis; coproporphyrinogen-III from 5-aminolevulinate: step 2/4. The protein operates within porphyrin-containing compound metabolism; chlorophyll biosynthesis. In terms of biological role, tetrapolymerization of the monopyrrole PBG into the hydroxymethylbilane pre-uroporphyrinogen in several discrete steps. The chain is Porphobilinogen deaminase from Chlorobium phaeobacteroides (strain BS1).